A 336-amino-acid chain; its full sequence is Heat-inducible transcription repressor HrcA (336 aa).

This sequence belongs to the HrcA family.

Its function is as follows. Negative regulator of class I heat shock genes (grpE-dnaK-dnaJ and groELS operons). Prevents heat-shock induction of these operons. This chain is Heat-inducible transcription repressor HrcA, found in Variovorax paradoxus (strain S110).